The following is a 213-amino-acid chain: Thymidylate kinase (213 aa).

10–17 (GLEGAGKT) is a binding site for ATP.

Belongs to the thymidylate kinase family.

The catalysed reaction is dTMP + ATP = dTDP + ADP. In terms of biological role, phosphorylation of dTMP to form dTDP in both de novo and salvage pathways of dTTP synthesis. The chain is Thymidylate kinase from Escherichia coli O6:K15:H31 (strain 536 / UPEC).